The following is a 549-amino-acid chain: Glucose-6-phosphate isomerase (549 aa).

E353 acts as the Proton donor in catalysis. Catalysis depends on residues H384 and K510.

It belongs to the GPI family.

It localises to the cytoplasm. It carries out the reaction alpha-D-glucose 6-phosphate = beta-D-fructose 6-phosphate. It participates in carbohydrate biosynthesis; gluconeogenesis. The protein operates within carbohydrate degradation; glycolysis; D-glyceraldehyde 3-phosphate and glycerone phosphate from D-glucose: step 2/4. Functionally, catalyzes the reversible isomerization of glucose-6-phosphate to fructose-6-phosphate. The chain is Glucose-6-phosphate isomerase from Mycolicibacterium smegmatis (Mycobacterium smegmatis).